Consider the following 394-residue polypeptide: Ribulose bisphosphate carboxylase large chain (394 aa).

K5 carries the N6,N6,N6-trimethyllysine modification. The substrate site is built by N114 and T164. The active-site Proton acceptor is K166. Position 168 (K168) interacts with substrate. Mg(2+) is bound by residues K192, D194, and E195. K192 carries the post-translational modification N6-carboxylysine. The active-site Proton acceptor is H285. The substrate site is built by R286, H318, and S370.

This sequence belongs to the RuBisCO large chain family. Type I subfamily. As to quaternary structure, heterohexadecamer of 8 large chains and 8 small chains; disulfide-linked. The disulfide link is formed within the large subunit homodimers. Mg(2+) serves as cofactor. The disulfide bond which can form in the large chain dimeric partners within the hexadecamer appears to be associated with oxidative stress and protein turnover.

The protein resides in the plastid. It is found in the chloroplast. It carries out the reaction 2 (2R)-3-phosphoglycerate + 2 H(+) = D-ribulose 1,5-bisphosphate + CO2 + H2O. The catalysed reaction is D-ribulose 1,5-bisphosphate + O2 = 2-phosphoglycolate + (2R)-3-phosphoglycerate + 2 H(+). RuBisCO catalyzes two reactions: the carboxylation of D-ribulose 1,5-bisphosphate, the primary event in carbon dioxide fixation, as well as the oxidative fragmentation of the pentose substrate in the photorespiration process. Both reactions occur simultaneously and in competition at the same active site. This is Ribulose bisphosphate carboxylase large chain (rbcL) from Nelumbo lutea (American lotus).